The following is a 216-amino-acid chain: Adenylate kinase (216 aa).

10 to 15 lines the ATP pocket; it reads GAGKGT. The interval 30-59 is NMP; that stretch reads STGDMFRAAMKAETELGLQAKSFIDKGALV. Residues T31, R36, 57 to 59, 85 to 88, and Q92 each bind AMP; these read ALV and GFPR. Residues 126 to 163 are LID; the sequence is GRRICKECGATYHLEFNPPAKADVCDKCGGELYQRSDD. R127 contributes to the ATP binding site. Positions 130 and 133 each coordinate Zn(2+). Residue 136–137 coordinates ATP; sequence TY. Zn(2+) contacts are provided by C150 and C153. R160 and R171 together coordinate AMP. Q199 provides a ligand contact to ATP.

Belongs to the adenylate kinase family. Monomer.

It is found in the cytoplasm. It catalyses the reaction AMP + ATP = 2 ADP. Its pathway is purine metabolism; AMP biosynthesis via salvage pathway; AMP from ADP: step 1/1. Catalyzes the reversible transfer of the terminal phosphate group between ATP and AMP. Plays an important role in cellular energy homeostasis and in adenine nucleotide metabolism. The polypeptide is Adenylate kinase (Bacillus mycoides (strain KBAB4) (Bacillus weihenstephanensis)).